The following is a 193-amino-acid chain: MTEYLLILVSTILVNNFVLVQFLGLCPFMGVSNKLETAMGMSLATTFVLTLSSLCSYLAYEYLLAPLGMEFLKTITFILVIAVVVQFTEMVIKKTSPLLYRVLGIFLPLITTNCAVLGVALLNIKKQNDFMESILYGFGAAVGFSLVLTLFSAMRERIAAADVPEPFKGGAIGMITAGLMSLAFLGFTGLVNI.

The next 6 membrane-spanning stretches (helical) occupy residues 5–25 (LLIL…FLGL), 38–58 (AMGM…CSYL), 65–85 (APLG…AVVV), 102–122 (VLGI…VALL), 134–154 (ILYG…FSAM), and 171–191 (AIGM…TGLV).

Belongs to the NqrDE/RnfAE family. In terms of assembly, the complex is composed of six subunits: RnfA, RnfB, RnfC, RnfD, RnfE and RnfG.

The protein resides in the cell inner membrane. Part of a membrane-bound complex that couples electron transfer with translocation of ions across the membrane. The protein is Ion-translocating oxidoreductase complex subunit A of Hahella chejuensis (strain KCTC 2396).